A 307-amino-acid chain; its full sequence is Peroxisomal protein PEX21 (307 aa).

Cysteine 4 is covalently cross-linked (Glycyl cysteine thioester (Cys-Gly) (interchain with G-Cter in ubiquitin)). The interval 23-52 (VGRVGGFNRPSGGLGQSSAEQQLQARAGER) is disordered.

The protein belongs to the peroxin-21 family. In terms of assembly, interacts with PEX7. Monoubiquitinated at Cys-4; acts as a signal for PEX21 extraction and is required for proper export from peroxisomes and recycling.

It is found in the cytoplasm. The protein localises to the cytosol. Its subcellular location is the peroxisome. Its function is as follows. Mediates peroxisomal import of proteins containing a C-terminal PTS2-type peroxisomal targeting signal via its interaction with PEX7. Interaction with PEX7 only takes place when PEX7 is associated with cargo proteins containing a PTS2 peroxisomal targeting signal. PEX7 along with PTS2-containing cargo proteins are then translocated through the PEX13-PEX14 docking complex together with PEX21. The protein is Peroxisomal protein PEX21 (PEX21) of Eremothecium gossypii (strain ATCC 10895 / CBS 109.51 / FGSC 9923 / NRRL Y-1056) (Yeast).